The chain runs to 189 residues: Protein F29A7.6 (189 aa).

Residues 124–161 are disordered; it reads KSLGGQKLAALDKKSQSKRERRQQNERNEETTGGRRFN. A compositionally biased stretch (basic and acidic residues) spans 133 to 161; sequence ALDKKSQSKRERRQQNERNEETTGGRRFN.

Belongs to the MPP6 family.

This Caenorhabditis elegans protein is Protein F29A7.6.